The sequence spans 327 residues: MTAPCPPPPPDPQFVLRGTQSPVHALHFCEGAQAQGRPLLFSGSQSGLVHIWSLQTRRAVTTLDGHGGQCVTWLQTLPQGRQLLSQGRDLKLCLWDLAEGRSAVVDSVCLESVGFCRSSILAGGQPRWTLAVPGRGSDEVQILEMPSKTSVCALKPKADAKLGMPMCLRLWQADCSSRPLLLAGYEDGSVVLWDVSEQKVCSRIACHEEPVMDLDFDSQKARGISGSAGKALAVWSLDWQQALQVRGTHELTNPGIAEVTIRPDRKILATAGWDHRIRVFHWRTMQPLAVLAFHSAAVQCVAFTADGLLAAGSKDQRISLWSLYPRA.

7 WD repeats span residues 16-54, 58-97, 103-145, 153-195, 200-237, 242-282, and 286-323; these read LRGT…IWSL, RAVT…LWDL, AVVD…ILEM, ALKP…LWDV, VCSR…VWSL, ALQV…VFHW, and QPLA…LWSL.

Ubiquitous. Highly expressed in heart, liver, skeletal muscle, kidney, spleen, thymus and pancreas. Detected at low levels in lung, placenta and brain.

It localises to the cytoplasm. The protein localises to the nucleus. Its function is as follows. Acts as a critical regulator of DNA damage response (DDR) signaling via specifically regulating phosphatidylinositol 3-kinase-related protein kinase (PIKK) family proteins. The protein is Guanine nucleotide-binding protein subunit beta-like protein 1 of Homo sapiens (Human).